Reading from the N-terminus, the 204-residue chain is uncharacterized protein (204 aa).

The first 24 residues, 1-24 (MPINTFCKISLFICALFCSTVTLA), serve as a signal peptide directing secretion.

This is an uncharacterized protein from Pasteurella multocida (strain Pm70).